Consider the following 143-residue polypeptide: Gastrin-releasing peptide (143 aa).

The first 23 residues, 1–23 (MRGPELRLVLLALVLCQAPLGPA), serve as a signal peptide directing secretion. The residue at position 50 (M50) is a Methionine amide. The propeptide occupies 54-143 (STGESRHVLE…GLKAKEGALS (90 aa)). Residues 91-115 (KGNSSHRSPQLKPLSTHQPTLDTED) form a disordered region. Over residues 92-111 (GNSSHRSPQLKPLSTHQPTL) the composition is skewed to polar residues.

Belongs to the bombesin/neuromedin-B/ranatensin family.

The protein localises to the secreted. It is found in the cytoplasmic vesicle. The protein resides in the secretory vesicle lumen. Its subcellular location is the cell projection. It localises to the neuron projection. In terms of biological role, stimulates the release of gastrin and other gastrointestinal hormones. Contributes to the perception of prurient stimuli and to the transmission of itch signals in the spinal cord that promote scratching behavior. Contributes primarily to nonhistaminergic itch sensation. In one study, shown to act in the amygdala as part of an inhibitory network which inhibits memory specifically related to learned fear. In another study, shown to act on vasoactive intestinal peptide (VIP)-expressing cells in the auditory cortex, most likely via extrasynaptic diffusion from local and long-range sources, to mediate disinhibition of glutamatergic cells via VIP cell-specific GRPR signaling which leads to enhanced auditory fear memories. Contributes to the regulation of food intake. Inhibits voltage-gated sodium channels but enhances voltage-gated potassium channels in hippocampal neurons. Induces sighing by acting directly on the pre-Botzinger complex, a cluster of several thousand neurons in the ventrolateral medulla responsible for inspiration during respiratory activity. Induces an itch response through activation of receptors present on mast cells, triggering mast cell degranulation. The sequence is that of Gastrin-releasing peptide (GRP) from Cavia porcellus (Guinea pig).